The primary structure comprises 267 residues: Hemin import ATP-binding protein HmuV (267 aa).

The region spanning 3 to 243 is the ABC transporter domain; that stretch reads LEVRGIEVWR…ELVARVFGLR (241 aa). Position 35-42 (35-42) interacts with ATP; the sequence is GPNGAGKS.

This sequence belongs to the ABC transporter superfamily. Heme (hemin) importer (TC 3.A.1.14.5) family. As to quaternary structure, the complex is composed of two ATP-binding proteins (HmuV), two transmembrane proteins (HmuU) and a solute-binding protein (HmuT).

The protein resides in the cell inner membrane. Functionally, part of the ABC transporter complex HmuTUV involved in hemin import. Responsible for energy coupling to the transport system. The sequence is that of Hemin import ATP-binding protein HmuV from Myxococcus xanthus (strain DK1622).